The following is a 527-amino-acid chain: Chorismate synthase (527 aa).

Active-site residues include histidine 17, histidine 104, and aspartate 485.

It belongs to the chorismate synthase family.

Its subcellular location is the cytoplasm. The protein resides in the cytosol. The enzyme catalyses 5-O-(1-carboxyvinyl)-3-phosphoshikimate = chorismate + phosphate. The catalysed reaction is FMNH2 + NADP(+) = FMN + NADPH + 2 H(+). It participates in metabolic intermediate biosynthesis; chorismate biosynthesis; chorismate from D-erythrose 4-phosphate and phosphoenolpyruvate: step 7/7. Bifunctional chorismate synthase and flavin reductase. Catalyzes the conversion of 5-enolpyruvylshikimate 3-phosphate (EPSP) to form chorismate. Acts also as a flavin reductase (FR) able to generate reduced flavin mononucleotide in the presence of NADPH. This is Chorismate synthase from Plasmodium falciparum (isolate 3D7).